The sequence spans 543 residues: Malate synthase (543 aa).

Belongs to the malate synthase family. As to quaternary structure, homodimer.

The protein resides in the cytoplasm. It carries out the reaction glyoxylate + acetyl-CoA + H2O = (S)-malate + CoA + H(+). Its pathway is carbohydrate metabolism; glyoxylate cycle; (S)-malate from isocitrate: step 2/2. The sequence is that of Malate synthase (aceB) from Streptomyces arenae.